Consider the following 180-residue polypeptide: Large ribosomal subunit protein uL5 (180 aa).

Belongs to the universal ribosomal protein uL5 family. As to quaternary structure, part of the 50S ribosomal subunit; part of the 5S rRNA/L5/L18/L25 subcomplex. Contacts the 5S rRNA and the P site tRNA. Forms a bridge to the 30S subunit in the 70S ribosome.

Its function is as follows. This is one of the proteins that bind and probably mediate the attachment of the 5S RNA into the large ribosomal subunit, where it forms part of the central protuberance. In the 70S ribosome it contacts protein S13 of the 30S subunit (bridge B1b), connecting the 2 subunits; this bridge is implicated in subunit movement. Contacts the P site tRNA; the 5S rRNA and some of its associated proteins might help stabilize positioning of ribosome-bound tRNAs. This chain is Large ribosomal subunit protein uL5, found in Lactobacillus johnsonii (strain CNCM I-12250 / La1 / NCC 533).